We begin with the raw amino-acid sequence, 442 residues long: MKLQYLVALLSVQAVPPVTAGYIHQYALVGSVIRQPIDQKTQRENLNKLVSDSPLLSLHRTICEIESVSNREGAVGEVLLKYLRDRGFTVEKQIVPADRGTNSTAERFNIWAYPKGCPRPKIILTSHIDTVPPHIKYSLHAPDGDFDRAKVRIMGRGTVDAKASVAAQIIAALKHLKSNKDIPLGLLFVVSEEVGGSGMVHFSNSELNTNPPFFHTLIFGEPTDLTLVDGHKGNLRVTIEAKGVAAHSGYPWLGRSAISEILPILARMDELGDIPVETGGLPSSEKYGRTTVNIGTIKGGAADNVVPETASASIAVRLAAGTPEEAEEIIRRAVHDVSGGSTNITVNFPDSMPYPPIDLDVDVEGFDISTVNYGTDIPKLEIHDEELEVKVKRYLYGPGTIFVAHGAEEGITVGDLEKAVEGYSKLIDAAVKRGWPREVVVN.

Residues 1-20 form the signal peptide; the sequence is MKLQYLVALLSVQAVPPVTA. The N-linked (GlcNAc...) asparagine glycan is linked to N102. D160 contacts Zn(2+). Residue E192 is the Proton acceptor of the active site. Residue E193 participates in Zn(2+) binding. The N-linked (GlcNAc...) asparagine glycan is linked to N343.

The protein belongs to the peptidase M20A family. Zn(2+) serves as cofactor.

It is found in the secreted. The chain is Probable carboxypeptidase PADG_04062 from Paracoccidioides brasiliensis (strain Pb18).